A 386-amino-acid chain; its full sequence is Succinate--CoA ligase [ADP-forming] subunit beta (386 aa).

ATP contacts are provided by residues Lys-46, 53-55 (GRG), Glu-99, Ala-102, and Glu-107. Positions 199 and 213 each coordinate Mg(2+). Residues Asn-264 and 321 to 323 (GIV) contribute to the substrate site.

This sequence belongs to the succinate/malate CoA ligase beta subunit family. In terms of assembly, heterotetramer of two alpha and two beta subunits. Mg(2+) serves as cofactor.

The enzyme catalyses succinate + ATP + CoA = succinyl-CoA + ADP + phosphate. It catalyses the reaction GTP + succinate + CoA = succinyl-CoA + GDP + phosphate. The protein operates within carbohydrate metabolism; tricarboxylic acid cycle; succinate from succinyl-CoA (ligase route): step 1/1. In terms of biological role, succinyl-CoA synthetase functions in the citric acid cycle (TCA), coupling the hydrolysis of succinyl-CoA to the synthesis of either ATP or GTP and thus represents the only step of substrate-level phosphorylation in the TCA. The beta subunit provides nucleotide specificity of the enzyme and binds the substrate succinate, while the binding sites for coenzyme A and phosphate are found in the alpha subunit. This is Succinate--CoA ligase [ADP-forming] subunit beta from Actinobacillus succinogenes (strain ATCC 55618 / DSM 22257 / CCUG 43843 / 130Z).